A 513-amino-acid polypeptide reads, in one-letter code: Probable tubulin polyglutamylase ttll-15 (513 aa).

A TTL domain is found at 73–411 (VTGSYESAHT…STPITKEADI (339 aa)). ATP is bound by residues 216-219 (QKFV), lysine 229, and aspartate 231.

The protein belongs to the tubulin--tyrosine ligase family. Expressed in hypodermis and pharyngeal muscles.

Probable polyglutamylase that forms polyglutamate side chains on tubulin. Probably acts when complexed with other proteins. Appears to be dispensable for polar spindle formation in dividing embryonic cells, for cilia-dependent osmotic avoidance and for male mating behavior. Regulates microtubule dynamics in uterine muscle cells. In Caenorhabditis elegans, this protein is Probable tubulin polyglutamylase ttll-15.